The primary structure comprises 313 residues: Solute carrier family 25 member 36 (313 aa).

3 Solcar repeats span residues 4-110 (RDTL…CKEK), 118-205 (DSTQ…IKRK), and 226-310 (SDFV…VVYL). The next 6 membrane-spanning stretches (helical) occupy residues 7-27 (LVHL…TCPL), 41-57 (LYIS…ASVN), 113-133 (NIFN…AGFT), 182-202 (MSAS…YESI), 228-248 (FVGM…IAYP), and 293-313 (QIPN…LLDG).

Belongs to the mitochondrial carrier (TC 2.A.29) family.

It localises to the mitochondrion inner membrane. Mitochondrial transporter that imports/exports pyrimidine nucleotides into and from mitochondria. Transports preferentially cytosine and uracil (deoxy)nucleoside mono-, di-, and triphosphates by uniport and antiport mechanism. This chain is Solute carrier family 25 member 36 (SLC25A36), found in Gallus gallus (Chicken).